Reading from the N-terminus, the 130-residue chain is Transcription antitermination protein NusB (130 aa).

It belongs to the NusB family.

Functionally, involved in transcription antitermination. Required for transcription of ribosomal RNA (rRNA) genes. Binds specifically to the boxA antiterminator sequence of the ribosomal RNA (rrn) operons. In Macrococcus caseolyticus (strain JCSC5402) (Macrococcoides caseolyticum), this protein is Transcription antitermination protein NusB.